The following is a 186-amino-acid chain: Oligoribonuclease (186 aa).

The Exonuclease domain occupies 12-175 (LIWIDLEMTG…DDIKDSIKEL (164 aa)). Tyr-133 is a catalytic residue.

It belongs to the oligoribonuclease family.

It is found in the cytoplasm. In terms of biological role, 3'-to-5' exoribonuclease specific for small oligoribonucleotides. The polypeptide is Oligoribonuclease (Wigglesworthia glossinidia brevipalpis).